A 267-amino-acid polypeptide reads, in one-letter code: Thiamine thiazole synthase (267 aa).

NAD(+) is bound by residues Ser47, 66-67, Gly74, Val138, and 164-166; these read ER and HID. 2 residues coordinate Fe cation: Asp166 and His181. 2 residues coordinate NAD(+): Ser184 and Met230. Arg240 contacts glycine.

This sequence belongs to the THI4 family. As to quaternary structure, homooctamer; tetramer of dimers. Fe(2+) is required as a cofactor.

It carries out the reaction hydrogen sulfide + glycine + NAD(+) = ADP-5-ethyl-4-methylthiazole-2-carboxylate + nicotinamide + 3 H2O + H(+). The protein operates within cofactor biosynthesis; thiamine diphosphate biosynthesis. In terms of biological role, involved in the biosynthesis of the thiazole moiety of thiamine. Catalyzes the conversion of NAD and glycine to adenosine diphosphate 5-(2-hydroxyethyl)-4-methylthiazole-2-carboxylate (ADT), an adenylated thiazole intermediate, using free sulfide as a source of sulfur. This Methanocaldococcus jannaschii (strain ATCC 43067 / DSM 2661 / JAL-1 / JCM 10045 / NBRC 100440) (Methanococcus jannaschii) protein is Thiamine thiazole synthase.